Reading from the N-terminus, the 312-residue chain is DNA-directed RNA polymerase subunit alpha (312 aa).

The tract at residues 1–226 (MIEFEKPNIT…EHLDIFVNLT (226 aa)) is alpha N-terminal domain (alpha-NTD). The interval 243–312 (KEKMLEMTIE…DLGLGLRKED (70 aa)) is alpha C-terminal domain (alpha-CTD).

It belongs to the RNA polymerase alpha chain family. In terms of assembly, homodimer. The RNAP catalytic core consists of 2 alpha, 1 beta, 1 beta' and 1 omega subunit. When a sigma factor is associated with the core the holoenzyme is formed, which can initiate transcription.

The enzyme catalyses RNA(n) + a ribonucleoside 5'-triphosphate = RNA(n+1) + diphosphate. DNA-dependent RNA polymerase catalyzes the transcription of DNA into RNA using the four ribonucleoside triphosphates as substrates. In Lacticaseibacillus casei (strain BL23) (Lactobacillus casei), this protein is DNA-directed RNA polymerase subunit alpha.